The sequence spans 521 residues: Glutamyl-tRNA(Gln) amidotransferase subunit A, mitochondrial (521 aa).

Active-site charge relay system residues include Lys-61 and Ser-139. Residue Ser-163 is the Acyl-ester intermediate of the active site.

It belongs to the amidase family. GatA subfamily. In terms of assembly, subunit of the heterotrimeric GatCAB amidotransferase (AdT) complex, composed of A, B and C subunits.

The protein localises to the mitochondrion. The catalysed reaction is L-glutamyl-tRNA(Gln) + L-glutamine + ATP + H2O = L-glutaminyl-tRNA(Gln) + L-glutamate + ADP + phosphate + H(+). Allows the formation of correctly charged Gln-tRNA(Gln) through the transamidation of misacylated Glu-tRNA(Gln) in the mitochondria. The reaction takes place in the presence of glutamine and ATP through an activated gamma-phospho-Glu-tRNA(Gln). This chain is Glutamyl-tRNA(Gln) amidotransferase subunit A, mitochondrial, found in Ajellomyces capsulatus (strain G186AR / H82 / ATCC MYA-2454 / RMSCC 2432) (Darling's disease fungus).